We begin with the raw amino-acid sequence, 244 residues long: 1-(5-phosphoribosyl)-5-[(5-phosphoribosylamino)methylideneamino] imidazole-4-carboxamide isomerase (244 aa).

Catalysis depends on Asp-13, which acts as the Proton acceptor. The active-site Proton donor is the Asp-132.

The protein belongs to the HisA/HisF family.

It is found in the cytoplasm. It catalyses the reaction 1-(5-phospho-beta-D-ribosyl)-5-[(5-phospho-beta-D-ribosylamino)methylideneamino]imidazole-4-carboxamide = 5-[(5-phospho-1-deoxy-D-ribulos-1-ylimino)methylamino]-1-(5-phospho-beta-D-ribosyl)imidazole-4-carboxamide. Its pathway is amino-acid biosynthesis; L-histidine biosynthesis; L-histidine from 5-phospho-alpha-D-ribose 1-diphosphate: step 4/9. The sequence is that of 1-(5-phosphoribosyl)-5-[(5-phosphoribosylamino)methylideneamino] imidazole-4-carboxamide isomerase from Renibacterium salmoninarum (strain ATCC 33209 / DSM 20767 / JCM 11484 / NBRC 15589 / NCIMB 2235).